The sequence spans 474 residues: Adenosylhomocysteinase (474 aa).

Substrate contacts are provided by Thr-53, Asp-135, and Glu-197. 198–200 (TTT) provides a ligand contact to NAD(+). Substrate is bound by residues Lys-227 and Asp-231. Residues Asn-232, 261–266 (GYGDVG), Glu-284, Asn-319, 340–342 (IGH), and Asn-388 each bind NAD(+).

The protein belongs to the adenosylhomocysteinase family. Requires NAD(+) as cofactor.

It is found in the cytoplasm. The enzyme catalyses S-adenosyl-L-homocysteine + H2O = L-homocysteine + adenosine. It functions in the pathway amino-acid biosynthesis; L-homocysteine biosynthesis; L-homocysteine from S-adenosyl-L-homocysteine: step 1/1. Its function is as follows. May play a key role in the regulation of the intracellular concentration of adenosylhomocysteine. This is Adenosylhomocysteinase from Corynebacterium glutamicum (strain ATCC 13032 / DSM 20300 / JCM 1318 / BCRC 11384 / CCUG 27702 / LMG 3730 / NBRC 12168 / NCIMB 10025 / NRRL B-2784 / 534).